The sequence spans 309 residues: Homoserine kinase (309 aa).

An ATP-binding site is contributed by 91-101 (PIGSGLGSSAC).

It belongs to the GHMP kinase family. Homoserine kinase subfamily.

It is found in the cytoplasm. It carries out the reaction L-homoserine + ATP = O-phospho-L-homoserine + ADP + H(+). Its pathway is amino-acid biosynthesis; L-threonine biosynthesis; L-threonine from L-aspartate: step 4/5. In terms of biological role, catalyzes the ATP-dependent phosphorylation of L-homoserine to L-homoserine phosphate. The chain is Homoserine kinase from Buchnera aphidicola subsp. Acyrthosiphon pisum (strain APS) (Acyrthosiphon pisum symbiotic bacterium).